Reading from the N-terminus, the 328-residue chain is Malate dehydrogenase (328 aa).

11 to 17 (GAAGQIG) provides a ligand contact to NAD(+). Arginine 92 and arginine 98 together coordinate substrate. NAD(+) is bound by residues asparagine 105, glutamine 112, and 129-131 (VGN). Substrate contacts are provided by asparagine 131 and arginine 162. Histidine 187 acts as the Proton acceptor in catalysis.

Belongs to the LDH/MDH superfamily. MDH type 2 family.

It catalyses the reaction (S)-malate + NAD(+) = oxaloacetate + NADH + H(+). In terms of biological role, catalyzes the reversible oxidation of malate to oxaloacetate. This chain is Malate dehydrogenase, found in Coxiella burnetii (strain CbuG_Q212) (Coxiella burnetii (strain Q212)).